We begin with the raw amino-acid sequence, 557 residues long: Formate--tetrahydrofolate ligase (557 aa).

65–72 (TPAGEGKT) provides a ligand contact to ATP.

This sequence belongs to the formate--tetrahydrofolate ligase family.

The catalysed reaction is (6S)-5,6,7,8-tetrahydrofolate + formate + ATP = (6R)-10-formyltetrahydrofolate + ADP + phosphate. Its pathway is one-carbon metabolism; tetrahydrofolate interconversion. The sequence is that of Formate--tetrahydrofolate ligase from Methylorubrum extorquens (strain PA1) (Methylobacterium extorquens).